Reading from the N-terminus, the 443-residue chain is ATP-dependent protease ATPase subunit HslU (443 aa).

ATP-binding positions include Ile-18 and 60–65 (GVGKTE). The disordered stretch occupies residues 139–158 (AKNNWGQNETPAEPSSARQS). ATP is bound by residues Asp-256, Glu-321, and Arg-393.

This sequence belongs to the ClpX chaperone family. HslU subfamily. A double ring-shaped homohexamer of HslV is capped on each side by a ring-shaped HslU homohexamer. The assembly of the HslU/HslV complex is dependent on binding of ATP.

It localises to the cytoplasm. ATPase subunit of a proteasome-like degradation complex; this subunit has chaperone activity. The binding of ATP and its subsequent hydrolysis by HslU are essential for unfolding of protein substrates subsequently hydrolyzed by HslV. HslU recognizes the N-terminal part of its protein substrates and unfolds these before they are guided to HslV for hydrolysis. The sequence is that of ATP-dependent protease ATPase subunit HslU from Erwinia tasmaniensis (strain DSM 17950 / CFBP 7177 / CIP 109463 / NCPPB 4357 / Et1/99).